The sequence spans 60 residues: Protein YoaG (60 aa).

As to quaternary structure, homodimer.

In Escherichia coli O157:H7, this protein is Protein YoaG (yoaG).